Consider the following 243-residue polypeptide: MQQTKFGKMYLDHDSVVEYSEDEIVEADRITLGYKKRLSMIENQMRHLLEDFSLDVQQIEPILADLQKYYDAFLQLLQKRNKSLQCKRSTHQPVPSPMNSQTSTNAKVNLSGKLMKFQLNSVQKFDEENILRILQNKIEFEHYFQIDKGKKQKVLLLAVYQCLNGPTRLHKVLNIEGIIHNNSIRTILGKQVSSSKWTVFLYDVKLVLLAHRQDVPNLETSKMIVRYGDLFPCALYFKDHTAY.

The protein resides in the cytoplasm. In terms of biological role, may have a role in actin patch assembly. The chain is Protein HUA2 (HUA2) from Saccharomyces cerevisiae (strain ATCC 204508 / S288c) (Baker's yeast).